The following is a 307-amino-acid chain: Nucleotide-binding protein Sca_0414 (307 aa).

19–26 serves as a coordination point for ATP; the sequence is GMSGAGKS. GTP is bound at residue 70–73; the sequence is DLRG.

Belongs to the RapZ-like family.

Functionally, displays ATPase and GTPase activities. The sequence is that of Nucleotide-binding protein Sca_0414 from Staphylococcus carnosus (strain TM300).